We begin with the raw amino-acid sequence, 259 residues long: MASTVLRRLEGKVALITGAASGIGESAARLFSRHGAKVVIADIQDELALNICKDLGSTFVHCDVTKEFDVETAVNTAVSTYGKLDIMLNNAGISGAPKYKISNTQLSDFKRVVDVNLVGVFLGTKHAARVMIPNRSGSIISTASAATAAAAGTPYPYICSKHGVVGLTRNAAVEMGGHGIRVNCVSPYYVATPMTRDDDWIQGCFSNLKGAVLTAEDVAEAALYLASDESKYVSGHNLLVDGGVSIMNQGCNMFDLMDS.

The transit peptide at 1-30 (MASTVLRRLEGKVALITGAASGIGESAARL) directs the protein to the mitochondrion. NAD(+) contacts are provided by residues 21–23 (SGI), Asp-42, 63–64 (DV), and 90–92 (NAG). Catalysis depends on Ser-144, which acts as the Proton donor. 2 residues coordinate substrate: Ser-144 and Tyr-157. The NAD(+) site is built by Tyr-157, Lys-161, and Thr-192. Tyr-157 functions as the Proton acceptor in the catalytic mechanism. Lys-161 functions as the Proton donor/acceptor in the catalytic mechanism.

The protein belongs to the short-chain dehydrogenases/reductases (SDR) family. Specifically expressed in glandular trichomes of mature flowers.

The protein localises to the mitochondrion. The catalysed reaction is borneol + NAD(+) = camphor + NADH + H(+). It functions in the pathway secondary metabolite biosynthesis; terpenoid biosynthesis. Its function is as follows. Involved in the biosynthesis of monoterpenes natural products related to camphor. Catalyzes the conversion of borneol into camphor. In Lavandula x intermedia (Lavandin), this protein is Borneol dehydrogenase, mitochondrial.